A 201-amino-acid chain; its full sequence is uncharacterized protein (201 aa).

2 coiled-coil regions span residues 3–43 (YMDD…EVYK) and 76–120 (TGQV…AKTK).

This is an uncharacterized protein from Archaeoglobus fulgidus (strain ATCC 49558 / DSM 4304 / JCM 9628 / NBRC 100126 / VC-16).